The chain runs to 155 residues: 6,7-dimethyl-8-ribityllumazine synthase (155 aa).

5-amino-6-(D-ribitylamino)uracil contacts are provided by residues F23, A57–E59, and A81–I83. A (2S)-2-hydroxy-3-oxobutyl phosphate-binding site is contributed by A86 to T87. The Proton donor role is filled by H89. Residue F114 participates in 5-amino-6-(D-ribitylamino)uracil binding. R128 lines the (2S)-2-hydroxy-3-oxobutyl phosphate pocket.

Belongs to the DMRL synthase family.

The catalysed reaction is (2S)-2-hydroxy-3-oxobutyl phosphate + 5-amino-6-(D-ribitylamino)uracil = 6,7-dimethyl-8-(1-D-ribityl)lumazine + phosphate + 2 H2O + H(+). The protein operates within cofactor biosynthesis; riboflavin biosynthesis; riboflavin from 2-hydroxy-3-oxobutyl phosphate and 5-amino-6-(D-ribitylamino)uracil: step 1/2. Catalyzes the formation of 6,7-dimethyl-8-ribityllumazine by condensation of 5-amino-6-(D-ribitylamino)uracil with 3,4-dihydroxy-2-butanone 4-phosphate. This is the penultimate step in the biosynthesis of riboflavin. This Geotalea uraniireducens (strain Rf4) (Geobacter uraniireducens) protein is 6,7-dimethyl-8-ribityllumazine synthase.